The primary structure comprises 49 residues: Sperm protamine P1 (49 aa).

The tract at residues 1–49 is disordered; it reads MARYRCCRSHSRSRCRRRRRRSRRRRRRSCGRRRRAGYRRYTVRYRRRR.

Belongs to the protamine P1 family. As to expression, testis.

It is found in the nucleus. It localises to the chromosome. Functionally, protamines substitute for histones in the chromatin of sperm during the haploid phase of spermatogenesis. They compact sperm DNA into a highly condensed, stable and inactive complex. This Macronycteris commersonii (Commerson's roundleaf bat) protein is Sperm protamine P1 (PRM1).